The following is a 192-amino-acid chain: Putative integrase/recombinase y4gC (192 aa).

In terms of domain architecture, Tyr recombinase spans 1–183; sequence MPSILERDQI…ATEDLRAIAL (183 aa). Active-site residues include Arg-41, Lys-66, His-135, Arg-138, and His-161. The active-site O-(3'-phospho-DNA)-tyrosine intermediate is the Tyr-170.

It belongs to the 'phage' integrase family.

The chain is Putative integrase/recombinase y4gC from Sinorhizobium fredii (strain NBRC 101917 / NGR234).